A 185-amino-acid chain; its full sequence is GTP cyclohydrolase 1 (185 aa).

Zn(2+)-binding residues include Cys76, His79, and Cys147.

It belongs to the GTP cyclohydrolase I family. As to quaternary structure, toroid-shaped homodecamer, composed of two pentamers of five dimers.

It catalyses the reaction GTP + H2O = 7,8-dihydroneopterin 3'-triphosphate + formate + H(+). It participates in cofactor biosynthesis; 7,8-dihydroneopterin triphosphate biosynthesis; 7,8-dihydroneopterin triphosphate from GTP: step 1/1. The protein is GTP cyclohydrolase 1 of Clostridium perfringens (strain 13 / Type A).